Consider the following 99-residue polypeptide: Large ribosomal subunit protein uL23 (99 aa).

The protein belongs to the universal ribosomal protein uL23 family. As to quaternary structure, part of the 50S ribosomal subunit. Contacts protein L29, and trigger factor when it is bound to the ribosome.

One of the early assembly proteins it binds 23S rRNA. One of the proteins that surrounds the polypeptide exit tunnel on the outside of the ribosome. Forms the main docking site for trigger factor binding to the ribosome. In Haemophilus influenzae (strain 86-028NP), this protein is Large ribosomal subunit protein uL23.